Reading from the N-terminus, the 339-residue chain is Ketol-acid reductoisomerase (NADP(+)) (339 aa).

Positions 1–182 constitute a KARI N-terminal Rossmann domain; it reads MRVYYDRDAD…GGGRSGIIET (182 aa). NADP(+) contacts are provided by residues 24–27, arginine 48, serine 51, serine 53, and 83–86; these read YGSQ and DELQ. The active site involves histidine 108. Position 134 (glycine 134) interacts with NADP(+). One can recognise a KARI C-terminal knotted domain in the interval 183 to 328; the sequence is TFREECETDL…EKLRAMMPWI (146 aa). Mg(2+) contacts are provided by aspartate 191, glutamate 195, glutamate 227, and glutamate 231. Serine 252 serves as a coordination point for substrate.

The protein belongs to the ketol-acid reductoisomerase family. Mg(2+) serves as cofactor.

The enzyme catalyses (2R)-2,3-dihydroxy-3-methylbutanoate + NADP(+) = (2S)-2-acetolactate + NADPH + H(+). It catalyses the reaction (2R,3R)-2,3-dihydroxy-3-methylpentanoate + NADP(+) = (S)-2-ethyl-2-hydroxy-3-oxobutanoate + NADPH + H(+). The protein operates within amino-acid biosynthesis; L-isoleucine biosynthesis; L-isoleucine from 2-oxobutanoate: step 2/4. It participates in amino-acid biosynthesis; L-valine biosynthesis; L-valine from pyruvate: step 2/4. Its function is as follows. Involved in the biosynthesis of branched-chain amino acids (BCAA). Catalyzes an alkyl-migration followed by a ketol-acid reduction of (S)-2-acetolactate (S2AL) to yield (R)-2,3-dihydroxy-isovalerate. In the isomerase reaction, S2AL is rearranged via a Mg-dependent methyl migration to produce 3-hydroxy-3-methyl-2-ketobutyrate (HMKB). In the reductase reaction, this 2-ketoacid undergoes a metal-dependent reduction by NADPH to yield (R)-2,3-dihydroxy-isovalerate. This chain is Ketol-acid reductoisomerase (NADP(+)), found in Chelativorans sp. (strain BNC1).